Here is a 216-residue protein sequence, read N- to C-terminus: Probable transaldolase (216 aa).

Lys83 serves as the catalytic Schiff-base intermediate with substrate.

The protein belongs to the transaldolase family. Type 3B subfamily.

Its subcellular location is the cytoplasm. The catalysed reaction is D-sedoheptulose 7-phosphate + D-glyceraldehyde 3-phosphate = D-erythrose 4-phosphate + beta-D-fructose 6-phosphate. It participates in carbohydrate degradation; pentose phosphate pathway; D-glyceraldehyde 3-phosphate and beta-D-fructose 6-phosphate from D-ribose 5-phosphate and D-xylulose 5-phosphate (non-oxidative stage): step 2/3. Transaldolase is important for the balance of metabolites in the pentose-phosphate pathway. This chain is Probable transaldolase, found in Methanococcus aeolicus (strain ATCC BAA-1280 / DSM 17508 / OCM 812 / Nankai-3).